The primary structure comprises 491 residues: Ketol-acid reductoisomerase (NADP(+)) (491 aa).

The 194-residue stretch at 15 to 208 (AQLGKCRFMG…GGHRAGVLES (194 aa)) folds into the KARI N-terminal Rossmann domain. NADP(+)-binding positions include 45-48 (CGAQ), Arg68, Arg76, Ser78, and 108-110 (DKQ). The active site involves His132. Residue Gly158 participates in NADP(+) binding. KARI C-terminal knotted domains follow at residues 209-344 (SFVA…TAPQ) and 345-484 (FEGK…MTDM). Residues Asp217, Glu221, Glu389, and Glu393 each contribute to the Mg(2+) site. Ser414 is a substrate binding site.

This sequence belongs to the ketol-acid reductoisomerase family. The cofactor is Mg(2+).

The enzyme catalyses (2R)-2,3-dihydroxy-3-methylbutanoate + NADP(+) = (2S)-2-acetolactate + NADPH + H(+). It carries out the reaction (2R,3R)-2,3-dihydroxy-3-methylpentanoate + NADP(+) = (S)-2-ethyl-2-hydroxy-3-oxobutanoate + NADPH + H(+). It participates in amino-acid biosynthesis; L-isoleucine biosynthesis; L-isoleucine from 2-oxobutanoate: step 2/4. The protein operates within amino-acid biosynthesis; L-valine biosynthesis; L-valine from pyruvate: step 2/4. Involved in the biosynthesis of branched-chain amino acids (BCAA). Catalyzes an alkyl-migration followed by a ketol-acid reduction of (S)-2-acetolactate (S2AL) to yield (R)-2,3-dihydroxy-isovalerate. In the isomerase reaction, S2AL is rearranged via a Mg-dependent methyl migration to produce 3-hydroxy-3-methyl-2-ketobutyrate (HMKB). In the reductase reaction, this 2-ketoacid undergoes a metal-dependent reduction by NADPH to yield (R)-2,3-dihydroxy-isovalerate. This chain is Ketol-acid reductoisomerase (NADP(+)), found in Salmonella heidelberg (strain SL476).